The chain runs to 427 residues: L-rhamnose isomerase (427 aa).

Mn(2+) contacts are provided by histidine 264, aspartate 296, and aspartate 298.

Belongs to the rhamnose isomerase family. Requires Mn(2+) as cofactor.

The protein localises to the cytoplasm. The enzyme catalyses L-rhamnopyranose = L-rhamnulose. Its pathway is carbohydrate degradation; L-rhamnose degradation; glycerone phosphate from L-rhamnose: step 1/3. Its function is as follows. Catalyzes the interconversion of L-rhamnose and L-rhamnulose. The polypeptide is L-rhamnose isomerase (Rhodopirellula baltica (strain DSM 10527 / NCIMB 13988 / SH1)).